Reading from the N-terminus, the 188-residue chain is GMP synthase [glutamine-hydrolyzing] subunit A (188 aa).

Positions 2–188 constitute a Glutamine amidotransferase type-1 domain; it reads KVAVIYFGGQ…FKNFIKICRK (187 aa). C79 acts as the Nucleophile in catalysis. Residues H166 and E168 contribute to the active site.

In terms of assembly, heterodimer composed of a glutamine amidotransferase subunit (A) and a GMP-binding subunit (B).

The enzyme catalyses XMP + L-glutamine + ATP + H2O = GMP + L-glutamate + AMP + diphosphate + 2 H(+). It participates in purine metabolism; GMP biosynthesis; GMP from XMP (L-Gln route): step 1/1. Functionally, catalyzes the synthesis of GMP from XMP. The polypeptide is GMP synthase [glutamine-hydrolyzing] subunit A (Sulfolobus acidocaldarius (strain ATCC 33909 / DSM 639 / JCM 8929 / NBRC 15157 / NCIMB 11770)).